A 484-amino-acid polypeptide reads, in one-letter code: tRNA nucleotidyltransferase cca2 (484 aa).

The B/A element motif lies at 122-124; it reads RAE. Residues 125 to 142 form a flexible loop region; it reads SYDDKSRIPSVTPGTVET. The ERhxxExxxhh motif motif lies at 234–244; sequence ERVGEEIEKML.

The protein belongs to the tRNA nucleotidyltransferase/poly(A) polymerase family.

It localises to the cytoplasm. It catalyses the reaction a tRNA with a 3' CC end + ATP = a tRNA with a 3' CCA end + diphosphate. TRNA nucleotidyltransferase involved in the synthesis of the tRNA CCA terminus. In contrast to what is usually observed in eukaryotes for which one enzyme synthesizes the whole tRNA CCA terminus, in S.pombe, cca1 specifically adds two cytidine residues to a tRNA substrate lacking this sequence while cca2 specifically adds the terminal adenosine residue thereby completing the CCA sequence. The polypeptide is tRNA nucleotidyltransferase cca2 (Schizosaccharomyces pombe (strain 972 / ATCC 24843) (Fission yeast)).